Here is a 629-residue protein sequence, read N- to C-terminus: Embryonic polyadenylate-binding protein (629 aa).

RRM domains lie at 11–89 (ASLY…WSQR), 99–175 (GNVF…HFKS), 191–268 (TNVY…RAQK), and 294–370 (VNLY…LAQR). Residues 539–616 (QEPLTASSLA…AVAVLQAHQA (78 aa)) form the PABC domain.

It belongs to the polyadenylate-binding protein type-1 family. Interacts with dazl in an RNA-independent manner. The C-terminus can self-associate and also interact with the C-terminus of pabpc1, independently of RNA. RRM 1 and RRM 2 interact with both eif4g1 and paip1, and the C-terminus also interacts with paip1. Prior to oocyte maturation, found in a complex with dazl and pum2 proteins and spdy1 mRNA; pum2 dissociates from the complex during maturation. Interacts with the translation termination factor sup35/erf3.

Its subcellular location is the cytoplasm. In terms of biological role, binds and protects the poly(A) tail of mRNA with or without an AU-rich element (ARE) and prevents mRNA deadenylation. Stimulates the translation of mRNAs to which it is bound during early development. This Xenopus tropicalis (Western clawed frog) protein is Embryonic polyadenylate-binding protein.